We begin with the raw amino-acid sequence, 130 residues long: Small ribosomal subunit protein uS9 (130 aa).

Belongs to the universal ribosomal protein uS9 family.

This Xylella fastidiosa (strain 9a5c) protein is Small ribosomal subunit protein uS9.